We begin with the raw amino-acid sequence, 119 residues long: Holo-[acyl-carrier-protein] synthase (119 aa).

The Mg(2+) site is built by D5 and E51.

Belongs to the P-Pant transferase superfamily. AcpS family. The cofactor is Mg(2+).

The protein resides in the cytoplasm. It catalyses the reaction apo-[ACP] + CoA = holo-[ACP] + adenosine 3',5'-bisphosphate + H(+). In terms of biological role, transfers the 4'-phosphopantetheine moiety from coenzyme A to a Ser of acyl-carrier-protein. The protein is Holo-[acyl-carrier-protein] synthase of Helicobacter pylori (strain J99 / ATCC 700824) (Campylobacter pylori J99).